Consider the following 391-residue polypeptide: Tryptophan synthase beta chain (391 aa).

An N6-(pyridoxal phosphate)lysine modification is found at Lys-84.

This sequence belongs to the TrpB family. In terms of assembly, tetramer of two alpha and two beta chains. It depends on pyridoxal 5'-phosphate as a cofactor.

It carries out the reaction (1S,2R)-1-C-(indol-3-yl)glycerol 3-phosphate + L-serine = D-glyceraldehyde 3-phosphate + L-tryptophan + H2O. It participates in amino-acid biosynthesis; L-tryptophan biosynthesis; L-tryptophan from chorismate: step 5/5. Functionally, the beta subunit is responsible for the synthesis of L-tryptophan from indole and L-serine. The polypeptide is Tryptophan synthase beta chain (Thermoanaerobacter sp. (strain X514)).